Reading from the N-terminus, the 164-residue chain is UPF0114 protein YqhA (164 aa).

Helical transmembrane passes span 15–35, 53–73, and 136–156; these read LLAP…LKFF, LILV…LVMV, and LMWY…MGYL.

This sequence belongs to the UPF0114 family.

It is found in the cell membrane. This Shigella dysenteriae serotype 1 (strain Sd197) protein is UPF0114 protein YqhA.